The primary structure comprises 1031 residues: Toll-like receptor 9 (1031 aa).

A signal peptide spans 1 to 25 (MGPCHGALQPLSLLVQAAMLAVALA). Over 26–817 (QGTLPPFLPC…LCLDESLSWD (792 aa)) the chain is Extracellular. A disulfide bridge connects residues cysteine 35 and cysteine 45. 47-51 (WLFLK) is a DNA binding site. LRR repeat units follow at residues 62–85 (RDNVTSLSLLSNRIHHLHDSDFAQ), 87–110 (SNLQKLNLKWNCPPAGLSPMHFPC), 122–147 (VPTLEELNLSYNGITTVPALPSSLVS), 150–166 (LSRTNILQLDPTSLTGL), 167–190 (HALRFLYMDGNCYYKNPCGRALEV), 198–221 (LGNLTHLSLKYNNLTTVPRSLPPS), 223–242 (EYLLLSYNHIVTLAPEDLAN), 243–268 (LTALRVLDVGGNCRRCDHARNPCVEC), 283–306 (LSRLEGLVLKDSSLYQLNPRWFRG), 308–332 (GNLTVLDLSENFLYDCITKTKAFQG), 333–356 (LAQLRRLNLSFNYHKKVSFAHLTL), 363–386 (LLSLQELDMHGIFFRSLSQKTLQP), 390–413 (LPMLQRLYLQMNFINQAQLGIFKD), 414–438 (FPGLRYIDLSDNRISGAVEPVATTG), 470–494 (CKNLSFTLDLSRNNLVTVQPEMFAQ), 496–519 (SRLQCLRLSHNSISQAVNGSQFVP), 520–543 (LTSLQVLDLSHNKLDLYHGRSFTE), 545–567 (PRLEALDLSYNSQPFSMRGVGHN), 574–598 (LPTLRYLSLAHNGIHSRVSQQLCST), 600–622 (LWALDFSGNSLSQMWAEGDLYLR), 627–650 (LRSLIRLDLSQNRLHTLLPCTLGN), 652–675 (PKSLQLLRLRNNYLAFFNWSSLTL), 676–699 (LPNLETLDLAGNQLKALSNGSLPS), 701–723 (TQLQRLDVSRNSIIFVVPGFFAL), 724–747 (ATRLRELNLSANALRTVEPSWFGF), and 749–772 (AGSLEVLDVSANPLHCACGAAFVD). Residue asparagine 64 is glycosylated (N-linked (GlcNAc...) asparagine). Residues 72–77 (SNRIHH) and 95–109 (KWNCPPAGLSPMHFP) each bind DNA. A disulfide bridge links cysteine 98 with cysteine 110. Asparagine 129 is a glycosylation site (N-linked (GlcNAc...) asparagine). DNA contacts are provided by residues tyrosine 132, arginine 152, and 179–181 (YYK). A disulfide bridge connects residues cysteine 178 and cysteine 184. Asparagine 200 carries an N-linked (GlcNAc...) asparagine glycan. Tyrosine 208 is a binding site for DNA. 2 N-linked (GlcNAc...) asparagine glycosylation sites follow: asparagine 210 and asparagine 242. Disulfide bonds link cysteine 255–cysteine 268 and cysteine 258–cysteine 265. The S-palmitoyl cysteine moiety is linked to residue cysteine 258. Position 262 (arginine 262) interacts with DNA. A lipid anchor (S-palmitoyl cysteine) is attached at cysteine 265. Residues asparagine 309 and asparagine 340 are each glycosylated (N-linked (GlcNAc...) asparagine). Cysteines 470 and 500 form a disulfide. Residues asparagine 472 and asparagine 513 are each glycosylated (N-linked (GlcNAc...) asparagine). Residue asparagine 567 is glycosylated (N-linked (GlcNAc...) asparagine). N-linked (GlcNAc...) asparagine glycans are attached at residues asparagine 669 and asparagine 694. An N-linked (GlcNAc...) asparagine glycan is attached at asparagine 731. 2 disulfides stabilise this stretch: cysteine 764-cysteine 790 and cysteine 766-cysteine 809. A helical transmembrane segment spans residues 818 to 838 (CFGLSLLVVALGLAMPMLHHL). Topologically, residues 839–1031 (CGWDLWYCFH…NFCRGPTMAE (193 aa)) are cytoplasmic. Residues 866–1011 (LSYDAFVVFD…SFWAQLGMAL (146 aa)) enclose the TIR domain.

It belongs to the Toll-like receptor family. In terms of assembly, monomer and homodimer. Exists as a monomer in the absence of unmethylated cytidine-phosphate-guanosine (CpG) ligand. Proteolytic processing of an insertion loop (Z-loop) is required for homodimerization upon binding to the unmethylated CpG ligand leading to its activation. Interacts with MYD88 via their respective TIR domains. Interacts with BTK. Interacts (via transmembrane domain) with UNC93B1. Interacts with CD300LH; the interaction may promote full activation of TLR9-triggered innate responses. Interacts with CNPY3 and HSP90B1; this interaction is required for proper folding in the endoplasmic reticulum. Interacts with SMPDL3B. Interacts with CD82; this interaction is essential for TLR9-dependent myddosome formation in response to CpG stimulation. Activated by proteolytic cleavage of the flexible loop between repeats LRR14 and LRR15 within the ectodomain. Cleavage requires UNC93B1. Proteolytically processed by first removing the majority of the ectodomain by either asparagine endopeptidase (AEP) or a cathepsin followed by a trimming event that is solely cathepsin mediated and required for optimal receptor signaling. Post-translationally, palmitoylated by ZDHHC3 in the Golgi regulates TLR9 trafficking from the Golgi to endosomes. Depalmitoylation by PPT1 controls the release of TLR9 from UNC93B1 in endosomes. Expressed in airway epithelium, vascular endothelium and inflammatory cells in blood vessels of the lungs (at protein level). Highly expressed in pulmonary intravascular macrophages (PIMs) and to a lesser extent in alveolar macrophages, neutrophiles, type-II alveolar epithelial cells and bronchial epithelial cells of the lungs (at protein level). High constitutive intracellular expression in leukocytes including polymorphonuclear leukocytes (PMNs), CD4 and CD8 T cells (at protein level). Expressed throughout the respiratory tract including larynx, upper, middle and lower trachea, and bronchus in isolated equine respiratory epithelial cells (ERECs) and in fully differentiated ERECs cultured at the air-fluid interface (AFI) (at protein level). Constitutively expressed in peripheral blood mononuclear cells (PBMCs), lymph nodes and spleen. The level of expression in PBMCs is about 2- to 3-fold higher than that in lymph nodes and spleen. Very low expression in liver, heart, lung, kidney, small intestine, colon and stomach. Low expression in the airway tissue epithelium of the larynx, upper trachea, middle tranchea, lower trachea, bronchus and spleen, and more abundant expression in mesenteric lymph node. Not expressed in fully differentiated bronchus epithelial cells cultured at the AFI for four weeks. Expressed in gingival tissue.

The protein resides in the endoplasmic reticulum membrane. The protein localises to the endosome. It is found in the lysosome. It localises to the cytoplasmic vesicle. Its subcellular location is the phagosome. The protein resides in the cell membrane. The protein localises to the cytoplasm. It is found in the nucleus. Key component of innate and adaptive immunity. TLRs (Toll-like receptors) control host immune response against pathogens through recognition of molecular patterns specific to microorganisms. TLR9 is a nucleotide-sensing TLR which is activated by unmethylated cytidine-phosphate-guanosine (CpG) dinucleotides. Acts via MYD88 and TRAF6, leading to NF-kappa-B activation, cytokine secretion and the inflammatory response. Upon CpG stimulation, induces B-cell proliferation, activation, survival and antibody production. The protein is Toll-like receptor 9 of Equus caballus (Horse).